A 297-amino-acid chain; its full sequence is Diaminopimelate epimerase (297 aa).

The substrate site is built by N13, Q46, and N66. C76 (proton donor) is an active-site residue. Substrate-binding positions include 77–78 (GN), N174, N207, and 225–226 (ER). The Proton acceptor role is filled by C234. Residue 235–236 (GT) participates in substrate binding.

This sequence belongs to the diaminopimelate epimerase family. As to quaternary structure, homodimer.

The protein resides in the cytoplasm. It carries out the reaction (2S,6S)-2,6-diaminopimelate = meso-2,6-diaminopimelate. The protein operates within amino-acid biosynthesis; L-lysine biosynthesis via DAP pathway; DL-2,6-diaminopimelate from LL-2,6-diaminopimelate: step 1/1. In terms of biological role, catalyzes the stereoinversion of LL-2,6-diaminopimelate (L,L-DAP) to meso-diaminopimelate (meso-DAP), a precursor of L-lysine and an essential component of the bacterial peptidoglycan. This is Diaminopimelate epimerase from Leptothrix cholodnii (strain ATCC 51168 / LMG 8142 / SP-6) (Leptothrix discophora (strain SP-6)).